Consider the following 293-residue polypeptide: Undecaprenyl-diphosphatase (293 aa).

Transmembrane regions (helical) follow at residues 3–23 (IALA…EFLP), 43–63 (KGKI…CWEF), 85–105 (VNVI…GKWI), 109–129 (LFNP…ILLA), 178–198 (FALV…MLFG), 203–223 (VATE…TVYE), 238–258 (IFAV…RWLL), and 269–289 (FAWY…TGVI).

It belongs to the UppP family.

It is found in the cell inner membrane. The enzyme catalyses di-trans,octa-cis-undecaprenyl diphosphate + H2O = di-trans,octa-cis-undecaprenyl phosphate + phosphate + H(+). In terms of biological role, catalyzes the dephosphorylation of undecaprenyl diphosphate (UPP). Confers resistance to bacitracin. The protein is Undecaprenyl-diphosphatase of Cupriavidus metallidurans (strain ATCC 43123 / DSM 2839 / NBRC 102507 / CH34) (Ralstonia metallidurans).